A 23-amino-acid chain; its full sequence is Basic phospholipase A2 CB2 (23 aa).

It depends on Ca(2+) as a cofactor. In terms of processing, contains 7 disulfide bonds. Expressed by the venom gland.

It localises to the secreted. It carries out the reaction a 1,2-diacyl-sn-glycero-3-phosphocholine + H2O = a 1-acyl-sn-glycero-3-phosphocholine + a fatty acid + H(+). Snake venom phospholipase A2 (PLA2) that shows presynaptic neurotoxicity. PLA2 catalyzes the calcium-dependent hydrolysis of the 2-acyl groups in 3-sn-phosphoglycerides. The sequence is that of Basic phospholipase A2 CB2 from Crotalus durissus cumanensis (South American rattlesnake).